A 670-amino-acid polypeptide reads, in one-letter code: Zinc finger protein 233 (670 aa).

Residues 8–79 enclose the KRAB domain; that stretch reads VTFKDVAVVF…ETEIQGDGCS (72 aa). Residues 258 to 280 form a C2H2-type 1; degenerate zinc finger; sequence QTSDENGKGLSVGSNLELHQQLH. Residues 311–336 form a C2H2-type 2; degenerate zinc finger; the sequence is EKCYRNGDSGEGFSQGSHLQPHQRVS. The segment at 342-364 adopts a C2H2-type 3; degenerate zinc-finger fold; sequence YRCQVYARSSNQNSCLPSHELTH. Residues 370–392 form a C2H2-type 4; degenerate zinc finger; that stretch reads CTCGRCGKGFHHSLDFDIHCVDS. A C2H2-type 5; degenerate zinc finger spans residues 398-420; sequence CKCDVYDKGFSQTSQLQAHQRGH. C2H2-type zinc fingers lie at residues 452 to 474, 480 to 502, 508 to 530, 536 to 558, 564 to 586, 592 to 614, and 620 to 642; these read YKCEVCDKGFSKASNLQAHQRIH, YKCDVCDKNFSRNSHLQAHQRVH, YKCDTCGKDFSQISHLQAHQRVH, YKCETCGKGFSQSSHLQDHQQVH, YKCDVCGKGFSWSSHLQAHQRVH, YKCEECRKGFIWNSYLHVHQRIH, and YKCGMCGKSFSQTSHLQAHQRVH.

Belongs to the krueppel C2H2-type zinc-finger protein family.

Its subcellular location is the nucleus. May be involved in transcriptional regulation. The sequence is that of Zinc finger protein 233 (ZNF233) from Homo sapiens (Human).